Consider the following 103-residue polypeptide: Large ribosomal subunit protein uL24 (103 aa).

This sequence belongs to the universal ribosomal protein uL24 family. As to quaternary structure, part of the 50S ribosomal subunit.

In terms of biological role, one of two assembly initiator proteins, it binds directly to the 5'-end of the 23S rRNA, where it nucleates assembly of the 50S subunit. Its function is as follows. One of the proteins that surrounds the polypeptide exit tunnel on the outside of the subunit. The protein is Large ribosomal subunit protein uL24 of Dehalococcoides mccartyi (strain ATCC BAA-2100 / JCM 16839 / KCTC 5957 / BAV1).